The sequence spans 137 residues: MSSKMIDKLMSFFGIDEPEEEKEEVDSLQPVIPYDRKPKIVNIHTQPQVKVLILKPEKFEQVMNICNELKNKKPVIVDLQKMDKNEAQRVVDFLSGAAYALNGEIKKISGYIFLVAPENFDITGDIKDEVNSLYNLN.

Belongs to the SepF family. Homodimer. Interacts with FtsZ.

The protein localises to the cytoplasm. Functionally, cell division protein that is part of the divisome complex and is recruited early to the Z-ring. Probably stimulates Z-ring formation, perhaps through the cross-linking of FtsZ protofilaments. Its function overlaps with FtsA. The sequence is that of Cell division protein SepF from Thermoanaerobacter pseudethanolicus (strain ATCC 33223 / 39E) (Clostridium thermohydrosulfuricum).